The primary structure comprises 475 residues: Sulfate adenylyltransferase subunit 1 (475 aa).

The region spanning 25–239 (KSLLRFLTCG…EVLETVEIQR (215 aa)) is the tr-type G domain. Residues 34 to 41 (GSVDDGKS) form a G1 region. 34 to 41 (GSVDDGKS) contributes to the GTP binding site. The G2 stretch occupies residues 92–96 (GITID). The G3 stretch occupies residues 113–116 (DTPG). GTP contacts are provided by residues 113-117 (DTPGH) and 168-171 (NKMD). Residues 168–171 (NKMD) form a G4 region. The interval 206-208 (SAL) is G5.

The protein belongs to the TRAFAC class translation factor GTPase superfamily. Classic translation factor GTPase family. CysN/NodQ subfamily. As to quaternary structure, heterodimer composed of CysD, the smaller subunit, and CysN.

The catalysed reaction is sulfate + ATP + H(+) = adenosine 5'-phosphosulfate + diphosphate. It participates in sulfur metabolism; hydrogen sulfide biosynthesis; sulfite from sulfate: step 1/3. Functionally, with CysD forms the ATP sulfurylase (ATPS) that catalyzes the adenylation of sulfate producing adenosine 5'-phosphosulfate (APS) and diphosphate, the first enzymatic step in sulfur assimilation pathway. APS synthesis involves the formation of a high-energy phosphoric-sulfuric acid anhydride bond driven by GTP hydrolysis by CysN coupled to ATP hydrolysis by CysD. The sequence is that of Sulfate adenylyltransferase subunit 1 from Escherichia coli (strain 55989 / EAEC).